The primary structure comprises 306 residues: MIKQRTLKQATKVTGIGLHSGKKVTLTLRPAPANTGIVYARTDLEPAVYFPASAESIRDTQLCTCMINDDGVRISTVEHLNAAMASLGLDNLIVEVDAPEIPIMDGSASPFIYLLLDAGIEEQDAPKKFIRIRETVRVEEGDKWAEMKPYSKGLKLDFTIDFSHPMISKDVRNFKMELSAENFIHKISRARTFTFMKDVEYLQSIGLALGGSLDNAIVLDKYRILNEEGLRYKDELVKHKMLDSIGDLFMCGYNILGDFSAYKSGHGLNNKLLRAILANENAWEFVTFEDKEQAPEGYRIGEQVFI.

Residues His79, His239, and Asp243 each contribute to the Zn(2+) site. The active-site Proton donor is His266.

It belongs to the LpxC family. It depends on Zn(2+) as a cofactor.

The enzyme catalyses a UDP-3-O-[(3R)-3-hydroxyacyl]-N-acetyl-alpha-D-glucosamine + H2O = a UDP-3-O-[(3R)-3-hydroxyacyl]-alpha-D-glucosamine + acetate. It functions in the pathway glycolipid biosynthesis; lipid IV(A) biosynthesis; lipid IV(A) from (3R)-3-hydroxytetradecanoyl-[acyl-carrier-protein] and UDP-N-acetyl-alpha-D-glucosamine: step 2/6. In terms of biological role, catalyzes the hydrolysis of UDP-3-O-myristoyl-N-acetylglucosamine to form UDP-3-O-myristoylglucosamine and acetate, the committed step in lipid A biosynthesis. The chain is UDP-3-O-acyl-N-acetylglucosamine deacetylase from Actinobacillus pleuropneumoniae serotype 7 (strain AP76).